A 378-amino-acid polypeptide reads, in one-letter code: Response regulator aspartate phosphatase A (378 aa).

6 TPR repeats span residues 101 to 137 (YYFN…VSDD), 148 to 181 (AEIF…TVRR), 183 to 215 (QCEF…AKKE), 222 to 255 (SSAL…CKSE), 261 to 294 (PHSI…ARQY), and 336 to 369 (EELA…QKQI).

The protein belongs to the Rap family. In terms of assembly, homodimer. Interacts with its substrate, phosphorylated Spo0F, and its inhibitor, the PhrA pentapeptide. The RapA dimer forms a stable complex with two molecules of phosphorylated Spo0F. The complex is dissociated after dephosphorylation of Spo0F by RapA. Mn(2+) is required as a cofactor.

The protein localises to the cytoplasm. Its activity is regulated as follows. Phosphatase activity is inhibited by the phosphatase regulator PhrA. Interaction with PhrA dissociates the RapA-Spo0F complex. Activity is abolished in the presence of EDTA. Involved in the regulation of sporulation. Acts as a phosphatase that specifically dephosphorylates the sporulation initiation phosphotransferase Spo0F and inhibits its activity. The chain is Response regulator aspartate phosphatase A from Bacillus subtilis (strain 168).